We begin with the raw amino-acid sequence, 419 residues long: Tyrosine--tRNA ligase (419 aa).

Residue tyrosine 34 coordinates L-tyrosine. A 'HIGH' region motif is present at residues 39–48 (PTADSLHLGN). 2 residues coordinate L-tyrosine: tyrosine 169 and glutamine 173. Positions 229–233 (KFGKS) match the 'KMSKS' region motif. Residue lysine 232 participates in ATP binding. One can recognise an S4 RNA-binding domain in the interval 353–419 (LTLIELLISA…GKKKNFVLTY (67 aa)).

This sequence belongs to the class-I aminoacyl-tRNA synthetase family. TyrS type 1 subfamily. As to quaternary structure, homodimer.

It is found in the cytoplasm. It carries out the reaction tRNA(Tyr) + L-tyrosine + ATP = L-tyrosyl-tRNA(Tyr) + AMP + diphosphate + H(+). Its function is as follows. Catalyzes the attachment of tyrosine to tRNA(Tyr) in a two-step reaction: tyrosine is first activated by ATP to form Tyr-AMP and then transferred to the acceptor end of tRNA(Tyr). This Lactococcus lactis subsp. cremoris (strain SK11) protein is Tyrosine--tRNA ligase.